A 509-amino-acid polypeptide reads, in one-letter code: Surface lipoprotein assembly modifier (509 aa).

The N-terminal stretch at 1–32 is a signal peptide; it reads MNLMINLKPLTFLPFFGRLVFLSGVIYNTAWA. Residues 33 to 204 are N-terminal domain; it reads NTVIPVDNSR…SYIDTINQRD (172 aa). A disordered region spans residues 43 to 72; it reads PDETFSQTSPKQHLFSQKPKPTEPTSSASS. Positions 46-57 are enriched in polar residues; the sequence is TFSQTSPKQHLF. Residues 120 to 153 form a TPR repeat; it reads FLLKWAQAVVARKQGKLNESVRLYRQIIAEKPNL. The tract at residues 205–509 is C-terminal probable beta barrel; that stretch reads SWNVYGGVNY…RIYLTFSKTF (305 aa). The next 14 membrane-spanning stretches (beta stranded) occupy residues 206–216, 245–256, 261–270, 284–294, 298–308, 331–341, 345–355, 371–381, 386–395, 408–417, 423–432, 461–470, 476–485, and 499–509; these read WNVYGGVNYLH, LSYFINLSKNWS, FFTEFSADIN, STRLNLGGGYR, TEVKLMPFVEQ, SGINLDVDYWL, WKISTVLEYTE, YSISNTLIYMP, FWFVGLDYYQ, QGIRLGWGQE, STRLQTSYAT, GVNFTIWHRS, ITPKITWAYQ, and NRIYLTFSKTF.

It belongs to the Slam family.

The protein resides in the cell outer membrane. Required for correct export to the cell surface of some cell outer membrane lipoproteins (tested with PM1514) upon heterologous expression in E.coli and probably also in Pasteurella. This chain is Surface lipoprotein assembly modifier, found in Pasteurella multocida (strain Pm70).